Here is a 473-residue protein sequence, read N- to C-terminus: Heavy metal-associated isoprenylated plant protein 32 (473 aa).

The HMA domain maps to 9 to 72; the sequence is IQTCVLKVNI…KLAKSGKHAE (64 aa). A metal cation is bound by residues cysteine 20 and cysteine 23. Disordered regions lie at residues 96–139, 162–230, and 246–343; these read QIDH…KMGQ, KLPP…PNMT, and ANLA…QNMS. The span at 118 to 131 shows a compositional bias: gly residues; it reads KNGGGGGGGGGGGN. The span at 187–217 shows a compositional bias: acidic residues; it reads PEDDDDDDFSDEFDDEFTDDDDDEFDDEFDD. Gly residues predominate over residues 253–339; sequence AKNGGKGAPA…GFRPMGGGGP (87 aa). Cysteine 470 is modified (cysteine methyl ester). A lipid anchor (S-farnesyl cysteine) is attached at cysteine 470. The propeptide at 471–473 is removed in mature form; the sequence is DIM.

This sequence belongs to the HIPP family.

In terms of biological role, heavy-metal-binding protein. This chain is Heavy metal-associated isoprenylated plant protein 32, found in Arabidopsis thaliana (Mouse-ear cress).